A 599-amino-acid polypeptide reads, in one-letter code: Elongation factor 4 (599 aa).

Residues 4–186 (EHIRNFSIIA…EIVKKIPPPQ (183 aa)) enclose the tr-type G domain. GTP contacts are provided by residues 16 to 21 (DHGKST) and 133 to 136 (NKID).

The protein belongs to the TRAFAC class translation factor GTPase superfamily. Classic translation factor GTPase family. LepA subfamily.

It is found in the cell inner membrane. It carries out the reaction GTP + H2O = GDP + phosphate + H(+). Its function is as follows. Required for accurate and efficient protein synthesis under certain stress conditions. May act as a fidelity factor of the translation reaction, by catalyzing a one-codon backward translocation of tRNAs on improperly translocated ribosomes. Back-translocation proceeds from a post-translocation (POST) complex to a pre-translocation (PRE) complex, thus giving elongation factor G a second chance to translocate the tRNAs correctly. Binds to ribosomes in a GTP-dependent manner. The protein is Elongation factor 4 of Geobacter sp. (strain M21).